A 688-amino-acid polypeptide reads, in one-letter code: Protein adenylyltransferase SelO, mitochondrial (688 aa).

Residues 1–23 (MGEKRTIIKALKNSAASHFIKKL) constitute a mitochondrion transit peptide. Residues glycine 132, glycine 134, arginine 135, lysine 156, aspartate 168, glycine 169, arginine 220, and arginine 227 each contribute to the ATP site. Aspartate 338 acts as the Proton acceptor in catalysis. Residues asparagine 339 and aspartate 348 each contribute to the Mg(2+) site. Residue aspartate 348 coordinates ATP.

This sequence belongs to the SELO family. It depends on Mg(2+) as a cofactor. Forms probably one or more intrachain disulfide bridges.

The protein localises to the mitochondrion. The enzyme catalyses L-tyrosyl-[protein] + ATP = O-(5'-adenylyl)-L-tyrosyl-[protein] + diphosphate. In terms of biological role, catalyzes the transfer of adenosine 5'-monophosphate (AMP) to Tyr residues of target mitochondrial proteins (AMPylation). Involved in redox homeostasis by regulating the cellular response to oxidative stress. Regulates protein S-glutathionylation levels possibly by AMPylation of deglutathionylation enzymes such as glutaredoxins. This Saccharomyces cerevisiae (strain ATCC 204508 / S288c) (Baker's yeast) protein is Protein adenylyltransferase SelO, mitochondrial.